The following is a 306-amino-acid chain: Aspartate carbamoyltransferase catalytic subunit (306 aa).

Carbamoyl phosphate is bound by residues arginine 55 and threonine 56. Lysine 84 is an L-aspartate binding site. Carbamoyl phosphate contacts are provided by arginine 105, histidine 133, and glutamine 136. 2 residues coordinate L-aspartate: arginine 166 and arginine 227. Leucine 265 and proline 266 together coordinate carbamoyl phosphate.

The protein belongs to the aspartate/ornithine carbamoyltransferase superfamily. ATCase family. Heterododecamer (2C3:3R2) of six catalytic PyrB chains organized as two trimers (C3), and six regulatory PyrI chains organized as three dimers (R2).

It catalyses the reaction carbamoyl phosphate + L-aspartate = N-carbamoyl-L-aspartate + phosphate + H(+). It participates in pyrimidine metabolism; UMP biosynthesis via de novo pathway; (S)-dihydroorotate from bicarbonate: step 2/3. Functionally, catalyzes the condensation of carbamoyl phosphate and aspartate to form carbamoyl aspartate and inorganic phosphate, the committed step in the de novo pyrimidine nucleotide biosynthesis pathway. The sequence is that of Aspartate carbamoyltransferase catalytic subunit from Aeromonas hydrophila subsp. hydrophila (strain ATCC 7966 / DSM 30187 / BCRC 13018 / CCUG 14551 / JCM 1027 / KCTC 2358 / NCIMB 9240 / NCTC 8049).